A 146-amino-acid polypeptide reads, in one-letter code: Gonadotropin subunit beta-2 (146 aa).

Residues 1–22 form the signal peptide; the sequence is MTVEISKVFVLMMLNLFLGASS. Cystine bridges form between Cys37-Cys85, Cys51-Cys100, Cys54-Cys138, Cys62-Cys116, Cys66-Cys118, and Cys121-Cys128. N-linked (GlcNAc...) asparagine glycosylation occurs at Asn41.

This sequence belongs to the glycoprotein hormones subunit beta family. As to quaternary structure, heterodimer of an alpha and a beta chain.

It is found in the secreted. Functionally, involved in gametogenesis and steroidogenesis. This is Gonadotropin subunit beta-2 (cgbb) from Trichopodus trichopterus (Three spot gourami).